Reading from the N-terminus, the 146-residue chain is Myoglobin (146 aa).

In terms of domain architecture, Globin spans 2 to 140 (ADLDAVLKCW…VIADLEANYK (139 aa)). Nitrite is bound at residue His-59. His-59 contacts O2. Position 88 (His-88) interacts with heme b.

Belongs to the globin family. Monomeric.

The protein localises to the cytoplasm. It localises to the sarcoplasm. The enzyme catalyses Fe(III)-heme b-[protein] + nitric oxide + H2O = Fe(II)-heme b-[protein] + nitrite + 2 H(+). The catalysed reaction is H2O2 + AH2 = A + 2 H2O. Monomeric heme protein which primary function is to store oxygen and facilitate its diffusion within muscle tissues. Reversibly binds oxygen through a pentacoordinated heme iron and enables its timely and efficient release as needed during periods of heightened demand. Depending on the oxidative conditions of tissues and cells, and in addition to its ability to bind oxygen, it also has a nitrite reductase activity whereby it regulates the production of bioactive nitric oxide. Under stress conditions, like hypoxia and anoxia, it also protects cells against reactive oxygen species thanks to its pseudoperoxidase activity. This Katsuwonus pelamis (Skipjack tuna) protein is Myoglobin (mb).